Consider the following 182-residue polypeptide: T-cell surface glycoprotein CD3 gamma chain (182 aa).

Positions 1–22 are cleaved as a signal peptide; the sequence is MEQGKGLAGLFLVISLLQGTMA. The Extracellular portion of the chain corresponds to 23–116; it reads QQKEEKHLVK…CIELNMGTVS (94 aa). An Ig-like domain is found at 37 to 94; the sequence is QGDGSVLLTCDFNEKTITWLKDGHRISPPNATKSTWNLGNGAKDPRGMYQCRGAKKKS. A disulfide bridge connects residues Cys46 and Cys87. Residue Asn66 is glycosylated (N-linked (GlcNAc...) asparagine). A helical membrane pass occupies residues 117-137; the sequence is GFIFAEIISIFFLAVGVYFIA. Topologically, residues 138 to 182 are cytoplasmic; sequence GQDGVRQSRASDKQTLLQNEQVYQPLKDREYEQYSRLQGNQVRKK. Phosphoserine is present on Ser145. Ser148 bears the Phosphoserine; by PKC mark. The ITAM domain maps to 149–177; it reads DKQTLLQNEQVYQPLKDREYEQYSRLQGN. Positions 153–154 match the Di-leucine motif motif; sequence LL.

As to quaternary structure, the TCR-CD3 complex is composed of a CD3D/CD3E and a CD3G/CD3E heterodimers that preferentially associate with TCRalpha and TCRbeta, respectively, to form TCRalpha/CD3E/CD3G and TCRbeta/CD3G/CD3E trimers. In turn, the hexamer interacts with CD3Z homodimer to form the TCR-CD3 complex. Alternatively, TCRalpha and TCRbeta can be replaced by TCRgamma and TCRdelta. Post-translationally, phosphorylated on Tyr residues after T-cell receptor triggering by LCK in association with CD4/CD8. Phosphorylated also by PKC; leading to the TCR complex down-regulation. In terms of processing, phosphorylated on Tyr residues after T-cell receptor triggering by LCK in association with CD4/CD8.

The protein resides in the cell membrane. Its function is as follows. Part of the TCR-CD3 complex present on T-lymphocyte cell surface that plays an essential role in adaptive immune response. When antigen presenting cells (APCs) activate T-cell receptor (TCR), TCR-mediated signals are transmitted across the cell membrane by the CD3 chains CD3D, CD3E, CD3G and CD3Z. All CD3 chains contain immunoreceptor tyrosine-based activation motifs (ITAMs) in their cytoplasmic domain. Upon TCR engagement, these motifs become phosphorylated by Src family protein tyrosine kinases LCK and FYN, resulting in the activation of downstream signaling pathways. In addition to this role of signal transduction in T-cell activation, CD3G plays an essential role in the dynamic regulation of TCR expression at the cell surface. Indeed, constitutive TCR cycling is dependent on the di-leucine-based (diL) receptor-sorting motif present in CD3G. This is T-cell surface glycoprotein CD3 gamma chain (Cd3g) from Rattus norvegicus (Rat).